Here is a 495-residue protein sequence, read N- to C-terminus: Cysteine--tRNA ligase (495 aa).

Cys-29 provides a ligand contact to Zn(2+). A 'HIGH' region motif is present at residues Val-31–His-41. The Zn(2+) site is built by Cys-209, His-234, and Glu-238. A 'KMSKS' region motif is present at residues Lys-266–Ser-270. Residue Lys-269 participates in ATP binding.

This sequence belongs to the class-I aminoacyl-tRNA synthetase family. Monomer. Zn(2+) is required as a cofactor.

It is found in the cytoplasm. It carries out the reaction tRNA(Cys) + L-cysteine + ATP = L-cysteinyl-tRNA(Cys) + AMP + diphosphate. This is Cysteine--tRNA ligase (cysS) from Aquifex aeolicus (strain VF5).